Reading from the N-terminus, the 255-residue chain is MNFIINSPLEQFTTRVYFGLSSGLINLDTITLTSFSIYSIAVVALILGFSILNDNNTNILPTRWSLAFESLYFTVEKMVSEQIGGLEGRLLFPFMFSLFMYILIANVVSLVPYSYAINAQLIWTIGLSVAIWIGCTLTGLANHGAKFFGLFLPSGTNLPLVPVLVIIELLSYIARALSLGLRLGSNILAGHLLLVILAGLILNFISISIFTFALGILPLSILLGIVALESAIAFIQAIVFTILTCSYIKDAIHLH.

Residues 1–6 (MNFIIN) constitute a propeptide, removed in mature form. A run of 5 helical transmembrane segments spans residues 32–52 (LTSF…FSIL), 91–111 (LFPF…VSLV), 121–141 (LIWT…TGLA), 159–200 (PLVP…LAGL), and 219–251 (LSIL…IKDA).

In terms of assembly, F-type ATP synthases have 2 components, the catalytic core F(1) and the membrane-embedded component F(0), linked together by a central stalk and a peripheral stalk. The central stalk, also called rotor shaft, is often seen as part of F(1). The peripheral stalk is seen as part of F(0). F(0) contains the membrane channel next to the rotor. F-type ATP synthases form dimers but each monomer functions independently in ATP generation. The dimer consists of 17 different polypeptides: ATP1 (subunit alpha, 3 molecules per monomer, part of F(1)), ATP2 (subunit beta, 3 copies per monomer, part of F(1)), ATP3 (subunit gamma, part of the central stalk), ATP4 (subunit b, part of the peripheral stalk), ATP5/OSCP (subunit 5/OSCP, part of the peripheral stalk), ATP6 (subunit a, part of the peripheral stalk), ATP7 (subunit d, part of the peripheral stalk), ATP8 (subunit 8, part of the peripheral stalk), OLI1 (subunit c, part of the rotor, 10 molecules per monomer), ATP14 (subunit h, part of the peripheral stalk), ATP15 (subunit epsilon, part of the central stalk), ATP16 (subunit delta, part of the central stalk), ATP17 (subunit f, part of the peripheral stalk), ATP18 (subunit i/j, part of the peripheral stalk), ATP19 (subunit k, dimer-specific, at interface between monomers), ATP20 (subunit g, at interface between monomers), TIM11 (subunit e, at interface between monomers).

It localises to the mitochondrion inner membrane. In terms of biological role, mitochondrial membrane ATP synthase (F(1)F(0) ATP synthase or Complex V) produces ATP from ADP in the presence of a proton gradient across the membrane which is generated by electron transport complexes of the respiratory chain. F-type ATP synthases consist of two structural domains, F(1) - containing the extramembraneous catalytic core, and F(0) - containing the membrane proton channel, linked together by a central stalk and a peripheral stalk. During catalysis, ATP synthesis in the catalytic domain of F(1) is coupled via a rotary mechanism of the central stalk subunits to proton translocation. Key component of the proton channel; it may play a direct role in the translocation of protons across the membrane. This Yarrowia lipolytica (strain CLIB 122 / E 150) (Yeast) protein is ATP synthase subunit a.